Here is a 407-residue protein sequence, read N- to C-terminus: [Pyruvate dehydrogenase (acetyl-transferring)] kinase isozyme 2, mitochondrial (407 aa).

The Histidine kinase domain occupies 135 to 364 (LEYKDTYGDD…DAVIYLKALS (230 aa)). Residues Tyr-215 and Tyr-216 each carry the phosphotyrosine modification. ATP contacts are provided by residues 251–258 (ELFKNAMR), Asp-290, 309–310 (ST), and 325–330 (GFGYGL). The residue at position 376 (Lys-376) is an N6-succinyllysine.

This sequence belongs to the PDK/BCKDK protein kinase family. As to quaternary structure, homodimer, and heterodimer with PDK1. Interacts with the pyruvate dehydrogenase complex subunit DLAT, and is part of the multimeric pyruvate dehydrogenase complex that contains multiple copies of pyruvate dehydrogenase (E1), dihydrolipoamide acetyltransferase (DLAT, E2) and lipoamide dehydrogenase (DLD, E3). Detected in heart (at protein level). Highest level of expression in heart and skeletal muscle and the lowest in spleen and lung. Liver, kidney, brain and testis levels are intermediate.

Its subcellular location is the mitochondrion matrix. The enzyme catalyses L-seryl-[pyruvate dehydrogenase E1 alpha subunit] + ATP = O-phospho-L-seryl-[pyruvate dehydrogenase E1 alpha subunit] + ADP + H(+). Its activity is regulated as follows. Activity increases in response to increased acetyl-CoA and NADH levels and upon binding to the pyruvate dehydrogenase subunit DLAT. Inhibited by ADP and pyruvate; these compounds interfere with DLAT binding and thereby inhibit kinase activity. Inhibited by dichloroacetate. Inhibited by AZD7545; this compound interferes with DLAT binding and thereby inhibits kinase activity. Reactive oxygen species cause the formation of disulfide bonds, and thereby inhibit the enzyme. Its function is as follows. Kinase that plays a key role in the regulation of glucose and fatty acid metabolism and homeostasis via phosphorylation of the pyruvate dehydrogenase subunits PDHA1 and PDHA2. This inhibits pyruvate dehydrogenase activity, and thereby regulates metabolite flux through the tricarboxylic acid cycle, down-regulates aerobic respiration and inhibits the formation of acetyl-coenzyme A from pyruvate. Inhibition of pyruvate dehydrogenase decreases glucose utilization and increases fat metabolism. Mediates cellular responses to insulin. Plays an important role in maintaining normal blood glucose levels and in metabolic adaptation to nutrient availability. Via its regulation of pyruvate dehydrogenase activity, plays an important role in maintaining normal blood pH and in preventing the accumulation of ketone bodies under starvation. Plays a role in the regulation of cell proliferation and in resistance to apoptosis under oxidative stress. Plays a role in p53/TP53-mediated apoptosis. The chain is [Pyruvate dehydrogenase (acetyl-transferring)] kinase isozyme 2, mitochondrial (Pdk2) from Rattus norvegicus (Rat).